Here is a 271-residue protein sequence, read N- to C-terminus: MSSKAVAHPNIAVWIMALGIAFSMALVLTAVFNANPWEDHTYDLAPPIVAGMPAPHRDGREKMVCSSCHIVTPPAIGTGPGSGTLPIVQGTPAPHVDGREKMPCASCHTIVKKGSVAKGAKAAPLPAAVTPGMPLPEAVSVALAVAPAPAAVPLGNEAHERMVPFRYQGKVVSIAGAGARSVWGDIYIQINDGINPPIWIDLAPRWYLQAEGCVVRPGMFVKGTAFRDPTQAAAGLDYAMSVMANGEICALRDNHLNGLWANAGGMDAEER.

The Cytoplasmic segment spans residues 1-10; the sequence is MSSKAVAHPN. Residues 11–31 traverse the membrane as a helical segment; it reads IAVWIMALGIAFSMALVLTAV. Residues 32–271 are Lumenal-facing; the sequence is FNANPWEDHT…NAGGMDAEER (240 aa). The MCR (magnetochrome) 1 motif lies at 48–71; the sequence is IVAGMPAPHRDGREKMVCSSCHIV. Heme contacts are provided by Cys-65, Cys-68, His-69, Cys-104, Cys-107, and His-108. The MCR 2 signature appears at 87–110; that stretch reads IVQGTPAPHVDGREKMPCASCHTI.

It belongs to the magnetosome MamX family. Requires heme as cofactor.

The protein localises to the magnetosome membrane. Functionally, required for correct biomineralization of the magnetosome, may be involved in redox control of biomineralization. May function with MamY, MamZ amd Mms6. The chain is Magnetosome protein MamX (mamX) from Paramagnetospirillum magneticum (strain ATCC 700264 / AMB-1) (Magnetospirillum magneticum).